The sequence spans 215 residues: Cytochrome c biogenesis ATP-binding export protein CcmA (215 aa).

Residues 3–215 (LEAENLAGER…MAAFSVEDIA (213 aa)) enclose the ABC transporter domain. ATP is bound at residue 35–42 (GPNGSGKS).

This sequence belongs to the ABC transporter superfamily. CcmA exporter (TC 3.A.1.107) family. In terms of assembly, the complex is composed of two ATP-binding proteins (CcmA) and two transmembrane proteins (CcmB).

The protein resides in the cell inner membrane. It carries out the reaction heme b(in) + ATP + H2O = heme b(out) + ADP + phosphate + H(+). Functionally, part of the ABC transporter complex CcmAB involved in the biogenesis of c-type cytochromes; once thought to export heme, this seems not to be the case, but its exact role is uncertain. Responsible for energy coupling to the transport system. The polypeptide is Cytochrome c biogenesis ATP-binding export protein CcmA (Brucella melitensis biotype 1 (strain ATCC 23456 / CCUG 17765 / NCTC 10094 / 16M)).